Reading from the N-terminus, the 477-residue chain is Methylenetetrahydrofolate--tRNA-(uracil-5-)-methyltransferase TrmFO (477 aa).

14–19 (GGGLAG) contributes to the FAD binding site.

This sequence belongs to the MnmG family. TrmFO subfamily. Requires FAD as cofactor.

The protein resides in the cytoplasm. It catalyses the reaction uridine(54) in tRNA + (6R)-5,10-methylene-5,6,7,8-tetrahydrofolate + NADH + H(+) = 5-methyluridine(54) in tRNA + (6S)-5,6,7,8-tetrahydrofolate + NAD(+). The enzyme catalyses uridine(54) in tRNA + (6R)-5,10-methylene-5,6,7,8-tetrahydrofolate + NADPH + H(+) = 5-methyluridine(54) in tRNA + (6S)-5,6,7,8-tetrahydrofolate + NADP(+). Its function is as follows. Catalyzes the folate-dependent formation of 5-methyl-uridine at position 54 (M-5-U54) in all tRNAs. The sequence is that of Methylenetetrahydrofolate--tRNA-(uracil-5-)-methyltransferase TrmFO from Rhizobium johnstonii (strain DSM 114642 / LMG 32736 / 3841) (Rhizobium leguminosarum bv. viciae).